The primary structure comprises 314 residues: DNA-directed RNA polymerase subunit alpha (314 aa).

Residues 1-228 are alpha N-terminal domain (alpha-NTD); it reads MIEIEKPNIE…EHLNIFVGLT (228 aa). Positions 245 to 314 are alpha C-terminal domain (alpha-CTD); sequence KEKVLEMTIE…ELGLGLRNEE (70 aa).

Belongs to the RNA polymerase alpha chain family. Homodimer. The RNAP catalytic core consists of 2 alpha, 1 beta, 1 beta' and 1 omega subunit. When a sigma factor is associated with the core the holoenzyme is formed, which can initiate transcription.

It carries out the reaction RNA(n) + a ribonucleoside 5'-triphosphate = RNA(n+1) + diphosphate. Its function is as follows. DNA-dependent RNA polymerase catalyzes the transcription of DNA into RNA using the four ribonucleoside triphosphates as substrates. This is DNA-directed RNA polymerase subunit alpha from Shouchella clausii (strain KSM-K16) (Alkalihalobacillus clausii).